Consider the following 148-residue polypeptide: Large ribosomal subunit protein uL15 (148 aa).

The tract at residues 1-51 (MNLSNLKPAEGSTKTRKRIGRGAGSGLGGTSTRGHKGAKSRSGYSKKVGFE) is disordered. Positions 21 to 31 (RGAGSGLGGTS) are enriched in gly residues.

It belongs to the universal ribosomal protein uL15 family. In terms of assembly, part of the 50S ribosomal subunit.

Binds to the 23S rRNA. In Bacteroides thetaiotaomicron (strain ATCC 29148 / DSM 2079 / JCM 5827 / CCUG 10774 / NCTC 10582 / VPI-5482 / E50), this protein is Large ribosomal subunit protein uL15.